A 288-amino-acid chain; its full sequence is Diaminopimelate epimerase (288 aa).

Substrate contacts are provided by Asn-13, Gln-46, and Asn-66. Residue Cys-75 is the Proton donor of the active site. Residues 76–77 (GN), Asn-166, Asn-199, and 217–218 (ER) contribute to the substrate site. Cys-226 acts as the Proton acceptor in catalysis. 227-228 (GT) is a substrate binding site.

Belongs to the diaminopimelate epimerase family. Homodimer.

The protein localises to the cytoplasm. It carries out the reaction (2S,6S)-2,6-diaminopimelate = meso-2,6-diaminopimelate. It participates in amino-acid biosynthesis; L-lysine biosynthesis via DAP pathway; DL-2,6-diaminopimelate from LL-2,6-diaminopimelate: step 1/1. Catalyzes the stereoinversion of LL-2,6-diaminopimelate (L,L-DAP) to meso-diaminopimelate (meso-DAP), a precursor of L-lysine and an essential component of the bacterial peptidoglycan. This Cupriavidus metallidurans (strain ATCC 43123 / DSM 2839 / NBRC 102507 / CH34) (Ralstonia metallidurans) protein is Diaminopimelate epimerase.